The chain runs to 100 residues: Urease subunit gamma (100 aa).

The protein belongs to the urease gamma subunit family. In terms of assembly, heterotrimer of UreA (gamma), UreB (beta) and UreC (alpha) subunits. Three heterotrimers associate to form the active enzyme.

The protein localises to the cytoplasm. It carries out the reaction urea + 2 H2O + H(+) = hydrogencarbonate + 2 NH4(+). It functions in the pathway nitrogen metabolism; urea degradation; CO(2) and NH(3) from urea (urease route): step 1/1. The polypeptide is Urease subunit gamma (Chromohalobacter salexigens (strain ATCC BAA-138 / DSM 3043 / CIP 106854 / NCIMB 13768 / 1H11)).